The chain runs to 100 residues: Large ribosomal subunit protein uL23 (100 aa).

It belongs to the universal ribosomal protein uL23 family. Part of the 50S ribosomal subunit. Contacts protein L29, and trigger factor when it is bound to the ribosome.

In terms of biological role, one of the early assembly proteins it binds 23S rRNA. One of the proteins that surrounds the polypeptide exit tunnel on the outside of the ribosome. Forms the main docking site for trigger factor binding to the ribosome. This Colwellia psychrerythraea (strain 34H / ATCC BAA-681) (Vibrio psychroerythus) protein is Large ribosomal subunit protein uL23.